The sequence spans 453 residues: MVEDTASVAALYRSYLTPLGIDINIVGTGRDAIESLNHRIPDLILLDLRLPDMTGMDVLHAVKKSHPDVPIIFMTAHGSIDTAVEAMRHGSQDFLIKPCEADRLRVTVNNAIRKATKLKNEADNPGNQNYQGFIGSSQTMQQVYRTIDSAASSKASIFITGESGTGKEVCAEAIHAASKRGDKPFIAINCAAIPKDLIESELFGHVKGAFTGAANDRQGAAELADGGTLFLDELCEMDLDLQTKLLRFIQTGTFQKVGSSKMKSVDVRFVCATNRDPWKEVQEGRFREDLYYRLYVIPLHLPPLRERGKDVIEIAYSLLGYMSHEEGKSFVRFAQDVIERFNSYEWPGNVRQLQNVLRNIVVLNNGKEITLDMLPPPLNQPVVRQSVAKFIEPDIMTVSDIMPLWMTEKMAIEQAIQACEGNIPRAAGYLDVSPSTIYRKLQAWNSKDEKQNV.

Residues 1 to 112 (MVEDTASVAA…RLRVTVNNAI (112 aa)) enclose the Response regulatory domain. A 4-aspartylphosphate modification is found at Asp47. Residues 133-362 (FIGSSQTMQQ…LQNVLRNIVV (230 aa)) form the Sigma-54 factor interaction domain. ATP contacts are provided by residues 161–168 (GESGTGKE) and 224–233 (ADGGTLFLDE).

Functionally, acts negatively to control the expression of luminescence. At low cell density, LuxO is phosphorylated, and together with sigma-54, causes repression of the luxCDABEGH operon. This repression could be indirect, LuxO could activate a negative regulator of luminescence. At high cell density, LuxO is dephosphorylated and inactive, therefore the luxCDABEGH operon is not repressed and light is emitted. LuxO and sigma-54 have also a role in activating the production of siderophore and in regulating the rugose colony morphology phenotype. The protein is Luminescence regulatory protein LuxO (luxO) of Vibrio campbellii (strain ATCC BAA-1116).